The primary structure comprises 400 residues: MAPVGSKRGVLERLNAGEVVIGDGGFVFALEKRGYVKAGPWTPEAAAEHPEAVRQLHREFLRAGSNVMQTFTFYASDDKLENRGNKLSFTGQQINEAACDLAREVANEGDALVAGGVSQTPSYLSCKSEEEVKKTFKKQLDVFIKKNVDLLIAEYFEHVEEAEWAVQVLKATGKPVAATLCIGPDGDMHGVIPGECAVRLVKAGADIVGVNCHFDPLTCVKTVAMMKAAVEKAGLKAHYMTQPLAYHTPDCSCQGFIDLPEFPFALEPRILTRWEMQQYAREAYKAGIRYIGGCCGFEPYHIRAVAEELSAERGFLPEASQKHGLWGSGLEMHTKPWVRARARRDYWEKLKPASGRPLCPSMSTPDGWGVTRGHAALMQQKEATTAEQLRPLFQQADAKH.

Residues 8-309 (RGVLERLNAG…YHIRAVAEEL (302 aa)) enclose the Hcy-binding domain. Residues Cys212, Cys294, and Cys295 each contribute to the Zn(2+) site.

In terms of assembly, homotetramer. Zn(2+) serves as cofactor.

The protein localises to the cytoplasm. It catalyses the reaction L-homocysteine + glycine betaine = N,N-dimethylglycine + L-methionine. Its pathway is amine and polyamine degradation; betaine degradation; sarcosine from betaine: step 1/2. It participates in amino-acid biosynthesis; L-methionine biosynthesis via de novo pathway; L-methionine from L-homocysteine (BhmT route): step 1/1. Its function is as follows. Involved in the regulation of homocysteine metabolism. Converts betaine and homocysteine to dimethylglycine and methionine, respectively. This reaction is also required for the irreversible oxidation of choline. This is Betaine--homocysteine S-methyltransferase 1 (bhmt) from Danio rerio (Zebrafish).